The chain runs to 404 residues: Phosphoglycerate kinase (404 aa).

Residues 21–23 (DFN), Arg-38, 61–64 (HLGR), Arg-126, and Arg-159 contribute to the substrate site. ATP is bound by residues Lys-210, Glu-333, and 360–363 (GGDS).

The protein belongs to the phosphoglycerate kinase family. In terms of assembly, monomer.

It is found in the cytoplasm. It catalyses the reaction (2R)-3-phosphoglycerate + ATP = (2R)-3-phospho-glyceroyl phosphate + ADP. The protein operates within carbohydrate degradation; glycolysis; pyruvate from D-glyceraldehyde 3-phosphate: step 2/5. The chain is Phosphoglycerate kinase from Acidobacterium capsulatum (strain ATCC 51196 / DSM 11244 / BCRC 80197 / JCM 7670 / NBRC 15755 / NCIMB 13165 / 161).